Consider the following 304-residue polypeptide: Recombination-associated protein RdgC (304 aa).

The protein belongs to the RdgC family.

Its subcellular location is the cytoplasm. The protein resides in the nucleoid. Its function is as follows. May be involved in recombination. This chain is Recombination-associated protein RdgC, found in Shewanella baltica (strain OS185).